The sequence spans 465 residues: uncharacterized protein (465 aa).

A run of 11 helical transmembrane segments spans residues 19 to 39 (VLGPAHVWALGVGIVLVGEYM), 50 to 70 (MIAGLMACWVAGLLYTCVAMI), 91 to 111 (IVGPLMAFNVGLFLVMAYTML), 140 to 160 (FIVLAIMFLAWLNYRGVLATL), 164 to 184 (LVITAIAFLAIVALFVSVQFG), 201 to 221 (PYGWVGIVASLHFGLWYYLGI), 244 to 264 (AGIMTLLIAATMTWYICSGLM), 288 to 308 (LMVLLFVGTAFATLASANGCI), 342 to 362 (IVFLVPIALIFALGAPLDQVV), 363 to 383 (TFSILSGLLGYTFMTFNMVMF), and 403 to 423 (LPTVVLLILCSTAYFAVFLGY).

It belongs to the amino acid-polyamine-organocation (APC) superfamily.

It is found in the cell membrane. Probable amino-acid or metabolite transport protein. This is an uncharacterized protein from Rhizobium meliloti (strain 1021) (Ensifer meliloti).